The primary structure comprises 233 residues: 5'-methylthioadenosine/S-adenosylhomocysteine nucleosidase (233 aa).

The active-site Proton acceptor is E12. Substrate contacts are provided by residues G78, I156, and 177–178; that span reads ME. Residue D201 is the Proton donor of the active site.

This sequence belongs to the PNP/UDP phosphorylase family. MtnN subfamily.

The enzyme catalyses S-adenosyl-L-homocysteine + H2O = S-(5-deoxy-D-ribos-5-yl)-L-homocysteine + adenine. The catalysed reaction is S-methyl-5'-thioadenosine + H2O = 5-(methylsulfanyl)-D-ribose + adenine. It carries out the reaction 5'-deoxyadenosine + H2O = 5-deoxy-D-ribose + adenine. Its pathway is amino-acid biosynthesis; L-methionine biosynthesis via salvage pathway; S-methyl-5-thio-alpha-D-ribose 1-phosphate from S-methyl-5'-thioadenosine (hydrolase route): step 1/2. Its function is as follows. Catalyzes the irreversible cleavage of the glycosidic bond in both 5'-methylthioadenosine (MTA) and S-adenosylhomocysteine (SAH/AdoHcy) to adenine and the corresponding thioribose, 5'-methylthioribose and S-ribosylhomocysteine, respectively. Also cleaves 5'-deoxyadenosine, a toxic by-product of radical S-adenosylmethionine (SAM) enzymes, into 5-deoxyribose and adenine. This is 5'-methylthioadenosine/S-adenosylhomocysteine nucleosidase from Listeria monocytogenes serotype 4a (strain HCC23).